Here is a 240-residue protein sequence, read N- to C-terminus: Agamous-like MADS-box protein AGL16 (240 aa).

Residues 1-61 form the MADS-box domain; the sequence is MGRGKIAIKR…GRLYDFSSSS (61 aa). Residues 86 to 176 form the K-box domain; it reads IQFWQKEAAI…HKKVNLMHQQ (91 aa).

Homodimer. Interacts with AGL15, AGL24, AP1, AGL6, AG, AGL1, AGL11, AGL5, SEP3, SEP1, AGL63, AGL14, SOC1 and AGL21. Interacts with AGL63. Interacts with SVP. Expressed at high levels in leaves, moderate levels in roots, seedlings and stems, and at low levels in flowers, pollen and siliques. Accumulates in leaf guard cells and trichomes. Also present in epidermal cells of roots. Expressed in mature guard cells.

It localises to the nucleus. In terms of biological role, probable transcription factor involved in the regulation of flowering time in long-day photoperiod. Participates in the repression of FT expression and floral transition, by interacting closely with the FLC-SVP pathways. Functions in the satellite meristemoid lineage of stomatal development. The polypeptide is Agamous-like MADS-box protein AGL16 (AGL16) (Arabidopsis thaliana (Mouse-ear cress)).